A 147-amino-acid chain; its full sequence is UPF0178 protein CV_1768 (147 aa).

The protein belongs to the UPF0178 family.

In Chromobacterium violaceum (strain ATCC 12472 / DSM 30191 / JCM 1249 / CCUG 213 / NBRC 12614 / NCIMB 9131 / NCTC 9757 / MK), this protein is UPF0178 protein CV_1768.